A 375-amino-acid chain; its full sequence is tRNA-specific 2-thiouridylase MnmA (375 aa).

ATP-binding positions include 13-20 (AMSGGVDS) and M39. C111 acts as the Nucleophile in catalysis. A disulfide bond links C111 and C208. Position 135 (G135) interacts with ATP. The interval 158–160 (KDQ) is interaction with tRNA. The active-site Cysteine persulfide intermediate is the C208. The interval 313-314 (RY) is interaction with tRNA.

It belongs to the MnmA/TRMU family.

The protein localises to the cytoplasm. It catalyses the reaction S-sulfanyl-L-cysteinyl-[protein] + uridine(34) in tRNA + AH2 + ATP = 2-thiouridine(34) in tRNA + L-cysteinyl-[protein] + A + AMP + diphosphate + H(+). In terms of biological role, catalyzes the 2-thiolation of uridine at the wobble position (U34) of tRNA, leading to the formation of s(2)U34. The sequence is that of tRNA-specific 2-thiouridylase MnmA from Geotalea uraniireducens (strain Rf4) (Geobacter uraniireducens).